A 449-amino-acid polypeptide reads, in one-letter code: Xaa-Pro dipeptidase (449 aa).

Residues aspartate 246, aspartate 257, histidine 345, glutamate 390, and glutamate 429 each contribute to the Mn(2+) site.

Belongs to the peptidase M24B family. Bacterial-type prolidase subfamily. Mn(2+) is required as a cofactor.

The catalysed reaction is Xaa-L-Pro dipeptide + H2O = an L-alpha-amino acid + L-proline. Functionally, splits dipeptides with a prolyl residue in the C-terminal position. The protein is Xaa-Pro dipeptidase of Yersinia enterocolitica serotype O:8 / biotype 1B (strain NCTC 13174 / 8081).